Reading from the N-terminus, the 265-residue chain is 4-hydroxy-tetrahydrodipicolinate reductase (265 aa).

16–21 (GANGKM) is a binding site for NAD(+). Residue Arg-43 participates in NADP(+) binding. Residues 106–108 (GTT) and 130–133 (SENF) each bind NAD(+). His-164 (proton donor/acceptor) is an active-site residue. His-165 is a (S)-2,3,4,5-tetrahydrodipicolinate binding site. The Proton donor role is filled by Lys-168. Residue 174-175 (AT) coordinates (S)-2,3,4,5-tetrahydrodipicolinate.

Belongs to the DapB family. In terms of assembly, homotetramer.

The protein localises to the cytoplasm. The catalysed reaction is (S)-2,3,4,5-tetrahydrodipicolinate + NAD(+) + H2O = (2S,4S)-4-hydroxy-2,3,4,5-tetrahydrodipicolinate + NADH + H(+). The enzyme catalyses (S)-2,3,4,5-tetrahydrodipicolinate + NADP(+) + H2O = (2S,4S)-4-hydroxy-2,3,4,5-tetrahydrodipicolinate + NADPH + H(+). The protein operates within amino-acid biosynthesis; L-lysine biosynthesis via DAP pathway; (S)-tetrahydrodipicolinate from L-aspartate: step 4/4. In terms of biological role, catalyzes the conversion of 4-hydroxy-tetrahydrodipicolinate (HTPA) to tetrahydrodipicolinate. The sequence is that of 4-hydroxy-tetrahydrodipicolinate reductase from Wigglesworthia glossinidia brevipalpis.